The following is a 432-amino-acid chain: Adenylosuccinate synthetase (432 aa).

GTP-binding positions include 13–19 (GDEGKGK) and 41–43 (GHT). The Proton acceptor role is filled by Asp14. Mg(2+)-binding residues include Asp14 and Gly41. IMP is bound by residues 14 to 17 (DEGK), 39 to 42 (NAGH), Thr130, Arg144, Gln225, Thr240, and Arg304. His42 (proton donor) is an active-site residue. 300–306 (ATTGRSR) provides a ligand contact to substrate. GTP contacts are provided by residues Arg306, 332–334 (KLD), and 415–417 (STG).

The protein belongs to the adenylosuccinate synthetase family. In terms of assembly, homodimer. Mg(2+) serves as cofactor.

Its subcellular location is the cytoplasm. The catalysed reaction is IMP + L-aspartate + GTP = N(6)-(1,2-dicarboxyethyl)-AMP + GDP + phosphate + 2 H(+). Its pathway is purine metabolism; AMP biosynthesis via de novo pathway; AMP from IMP: step 1/2. In terms of biological role, plays an important role in the de novo pathway of purine nucleotide biosynthesis. Catalyzes the first committed step in the biosynthesis of AMP from IMP. The chain is Adenylosuccinate synthetase from Marinomonas sp. (strain MWYL1).